We begin with the raw amino-acid sequence, 111 residues long: Cyclin-dependent protein kinase inhibitor SMR2 (111 aa).

The tract at residues 1–66 (MSKLLETLEE…PPPRKRPREI (66 aa)) is disordered. Over residues 10 to 35 (EEKTVEQKPRSQEEEDHQDSSKKEEL) the composition is skewed to basic and acidic residues.

Interacts with CYCD2-1. Interacts with CDKB1-1. Expressed at low levels in roots and stems. Expressed in the root vascular tissue.

It localises to the nucleus. Cyclin-dependent protein kinase (CDK) inhibitor that restricts cell proliferation and cooperates with SIM and SMR1 to promote endoreplication during leaf development. The chain is Cyclin-dependent protein kinase inhibitor SMR2 from Arabidopsis thaliana (Mouse-ear cress).